The chain runs to 219 residues: dTTP/UTP pyrophosphatase (219 aa).

The active-site Proton acceptor is the D79.

The protein belongs to the Maf family. YhdE subfamily. It depends on a divalent metal cation as a cofactor.

The protein resides in the cytoplasm. It carries out the reaction dTTP + H2O = dTMP + diphosphate + H(+). It catalyses the reaction UTP + H2O = UMP + diphosphate + H(+). Its function is as follows. Nucleoside triphosphate pyrophosphatase that hydrolyzes dTTP and UTP. May have a dual role in cell division arrest and in preventing the incorporation of modified nucleotides into cellular nucleic acids. This chain is dTTP/UTP pyrophosphatase, found in Oleidesulfovibrio alaskensis (strain ATCC BAA-1058 / DSM 17464 / G20) (Desulfovibrio alaskensis).